Here is a 146-residue protein sequence, read N- to C-terminus: Globin-1 (146 aa).

One can recognise a Globin domain in the interval 9–146 (QLTADVKKDL…KLVAVVQAAL (138 aa)). His101 is a binding site for heme b.

The protein belongs to the globin family. In terms of assembly, homodimer.

The protein localises to the cytoplasm. The sequence is that of Globin-1 from Anadara broughtonii (Blood clam).